A 448-amino-acid chain; its full sequence is Protein kinase C and casein kinase substrate in neurons protein 2 (448 aa).

The 272-residue stretch at 11 to 282 folds into the F-BAR domain; it reads VEVSSDSFWE…NIKTADAVED (272 aa). Residues 25–274 are a coiled coil; that stretch reads KRTVKRIDDG…NIYRELEQNI (250 aa). The disordered stretch occupies residues 315–386; that stretch reads SRREKKKASD…DTNPFDEDTS (72 aa). The span at 329–358 shows a compositional bias: polar residues; that stretch reads TGINQTGDQVSQPNKHSSVSSYEKNQSYPT. An NPF1 motif is present at residues 367–369; the sequence is NPF. The NPF2 motif lies at 379-381; it reads NPF. The region spanning 388-448 is the SH3 domain; that stretch reads VMEVRVRALY…YPANYVEPIQ (61 aa).

It belongs to the PACSIN family. Post-translationally, phosphorylated on serine residues. As to expression, detected in intestine, cardiac muscle, lung and brain (at protein level). Expressed in all tissues tested, including, gizzard, liver, cardiac muscle, skeletal muscle and skin.

Its subcellular location is the cytoplasm. The protein localises to the cytoskeleton. It localises to the cytoplasmic vesicle membrane. The protein resides in the cell projection. It is found in the ruffle membrane. Its subcellular location is the early endosome. The protein localises to the recycling endosome membrane. It localises to the cell membrane. The protein resides in the membrane. It is found in the caveola. Its subcellular location is the cell junction. The protein localises to the focal adhesion. Its function is as follows. Regulates the morphogenesis and endocytosis of caveolae. Lipid-binding protein that is able to promote the tubulation of the phosphatidic acid-containing membranes it preferentially binds. Plays a role in intracellular vesicle-mediated transport. Involved in the endocytosis of cell-surface receptors like the EGF receptor, contributing to its internalization in the absence of EGF stimulus. Essential for endothelial organization in sprouting angiogenesis, modulates CDH5-based junctions. Facilitates endothelial front-rear polarity during migration by recruiting EHD4 and MICALL1 to asymmetric adherens junctions between leader and follower cells. The sequence is that of Protein kinase C and casein kinase substrate in neurons protein 2 (PACSIN2) from Gallus gallus (Chicken).